A 1036-amino-acid chain; its full sequence is Vacuolar basic amino acid transporter VSB1 (1036 aa).

At 1–213 (MGRTIRRRRS…SKFAHYLPAA (213 aa)) the chain is on the vacuolar side. Phosphoserine is present on residues serine 42 and serine 127. The residue at position 130 (threonine 130) is a Phosphothreonine. Serine 140, serine 144, serine 149, serine 152, and serine 153 each carry phosphoserine. A helical transmembrane segment spans residues 214-234 (VLGLLLNILDALSYGMIIFPI). The Cytoplasmic segment spans residues 235–236 (TE). The helical transmembrane segment at 237-257 (PVFSHLGPTGISMFYISTIIS) threads the bilayer. Residues 258–269 (QAVYSGGWSSFP) are Vacuolar-facing. Residues 270-290 (SGIGSEMIEITPFYHTMALAI) traverse the membrane as a helical segment. Residues 291 to 300 (KEALAGNDDE) are Cytoplasmic-facing. A helical transmembrane segment spans residues 301–321 (IITTTIFCYVISSMLTGVVFY). The Vacuolar portion of the chain corresponds to 322–338 (ALGKLRLGKIVGFFPRH). Residues 339–359 (ILIGCIGGVGYFLIITGIEVT) form a helical membrane-spanning segment. The Cytoplasmic portion of the chain corresponds to 360-375 (TRVAKFEYSWPFFSGL). Residues 376 to 396 (FTDYDTLAKWLLPVLLTVVLI) form a helical membrane-spanning segment. At 397 to 405 (GTQRYFKNS) the chain is on the vacuolar side. Residues 406-426 (LVLPSFYILTLVLFHFIVAII) traverse the membrane as a helical segment. Residues 427–473 (PTLSLDALRQAGWIFPIANSDSKWYDHYRLFNVHKVHWSLVLQQIPT) are Cytoplasmic-facing. Residues 474–494 (MMALTFFGILHVPINVPALAM) form a helical membrane-spanning segment. Topologically, residues 495-515 (SLQMDKYDVDRELIAHGYSNF) are vacuolar. A helical transmembrane segment spans residues 516-536 (FSGLLGSVQNYLVYTNSVLFI). Residues 537–546 (RAGADSPFAG) lie on the Cytoplasmic side of the membrane. Residues 547–567 (FLLIALTICIMIIGPVIISFI) traverse the membrane as a helical segment. Proline 568 is a topological domain (vacuolar). A helical membrane pass occupies residues 569–589 (ICIVGSLIFLLGYELLVEALV). The Cytoplasmic segment spans residues 590 to 604 (DTWNKLNRFEYLTVV). The chain crosses the membrane as a helical span at residues 605-625 (IIVFTMGIFDFVLGIIVGILI). Residues 626–664 (ACFSFLVDSTKLQTINGEYNGNVARSTVYRDYVQTKFLD) are Vacuolar-facing. Positions 660–781 (TKFLDGIGEQ…ADLNSALEWC (122 aa)) constitute an STAS domain. Residues 665-685 (GIGEQIYVLKLQNLLFFGTII) traverse the membrane as a helical segment. Topologically, residues 686–1036 (SIEEKIERLL…ELLGYTLVSA (351 aa)) are cytoplasmic. Position 842 is a phosphoserine (serine 842). Residue threonine 847 is modified to Phosphothreonine.

The protein localises to the vacuole membrane. Its function is as follows. Amino acid transporter involved in vacuolar uptake of basic amino acids for storage during nitrogen replete condititions. May function as an amino acid/proton antiporter. This chain is Vacuolar basic amino acid transporter VSB1, found in Saccharomyces cerevisiae (strain ATCC 204508 / S288c) (Baker's yeast).